The primary structure comprises 385 residues: S-adenosylmethionine synthase (385 aa).

Histidine 16 is a binding site for ATP. Aspartate 18 contributes to the Mg(2+) binding site. Residue glutamate 44 coordinates K(+). L-methionine contacts are provided by glutamate 57 and glutamine 100. A flexible loop region spans residues 100-110; that stretch reads QSPDINQGVDR. ATP is bound by residues 164 to 166, 230 to 231, aspartate 239, 245 to 246, alanine 262, and lysine 266; these read DGK, KF, and RK. Residue aspartate 239 coordinates L-methionine. Position 270 (lysine 270) interacts with L-methionine.

Belongs to the AdoMet synthase family. Homotetramer; dimer of dimers. The cofactor is Mg(2+). K(+) is required as a cofactor.

It localises to the cytoplasm. The catalysed reaction is L-methionine + ATP + H2O = S-adenosyl-L-methionine + phosphate + diphosphate. Its pathway is amino-acid biosynthesis; S-adenosyl-L-methionine biosynthesis; S-adenosyl-L-methionine from L-methionine: step 1/1. Its function is as follows. Catalyzes the formation of S-adenosylmethionine (AdoMet) from methionine and ATP. The overall synthetic reaction is composed of two sequential steps, AdoMet formation and the subsequent tripolyphosphate hydrolysis which occurs prior to release of AdoMet from the enzyme. The chain is S-adenosylmethionine synthase from Helicobacter pylori (strain G27).